Consider the following 335-residue polypeptide: Trans-3-hydroxy-L-proline dehydratase (335 aa).

Cys-91 (proton acceptor) is an active-site residue. Substrate-binding positions include 92 to 93 (GH), His-222, and 256 to 257 (GS).

Belongs to the proline racemase family. Homodimer.

The catalysed reaction is trans-3-hydroxy-L-proline = 1-pyrroline-2-carboxylate + H2O. Functionally, catalyzes the dehydration of trans-3-hydroxy-L-proline (t3LHyp) to Delta(1)-pyrroline-2-carboxylate (Pyr2C). Does not possess neither proline racemase nor 4-hydroxyproline 2-epimerase activities. The chain is Trans-3-hydroxy-L-proline dehydratase from Burkholderia cenocepacia (strain HI2424).